Consider the following 154-residue polypeptide: Interleukin-7 (154 aa).

The N-terminal stretch at 1-25 (MFHVSFRYIFGIPPLILVLLPVTSS) is a signal peptide. 3 disulfides stabilise this stretch: C27–C145, C58–C133, and C71–C116. Residues N94 and N115 are each glycosylated (N-linked (GlcNAc...) asparagine).

The protein belongs to the IL-7/IL-9 family. Interacts with IL7R and CSF2RG. Post-translationally, three disulfide bonds are present.

It localises to the secreted. Hematopoietic cytokine that plays an essential role in the development, expansion, and survival of naive and memory T-cells and B-cells thereby regulating the number of mature lymphocytes and maintaining lymphoid homeostasis. Mechanistically, exerts its biological effects through a receptor composed of IL7RA subunit and the cytokine receptor common subunit gamma/CSF2RG. Binding to the receptor leads to activation of various kinases including JAK1 or JAK3 depending on the cell type and subsequently propagation of signals through activation of several downstream signaling pathways including the PI3K/Akt/mTOR or the JAK-STAT5. The polypeptide is Interleukin-7 (Il7) (Mus musculus (Mouse)).